The following is a 477-amino-acid chain: Aspartyl/glutamyl-tRNA(Asn/Gln) amidotransferase subunit B (477 aa).

It belongs to the GatB/GatE family. GatB subfamily. In terms of assembly, heterotrimer of A, B and C subunits.

It catalyses the reaction L-glutamyl-tRNA(Gln) + L-glutamine + ATP + H2O = L-glutaminyl-tRNA(Gln) + L-glutamate + ADP + phosphate + H(+). The enzyme catalyses L-aspartyl-tRNA(Asn) + L-glutamine + ATP + H2O = L-asparaginyl-tRNA(Asn) + L-glutamate + ADP + phosphate + 2 H(+). Allows the formation of correctly charged Asn-tRNA(Asn) or Gln-tRNA(Gln) through the transamidation of misacylated Asp-tRNA(Asn) or Glu-tRNA(Gln) in organisms which lack either or both of asparaginyl-tRNA or glutaminyl-tRNA synthetases. The reaction takes place in the presence of glutamine and ATP through an activated phospho-Asp-tRNA(Asn) or phospho-Glu-tRNA(Gln). This is Aspartyl/glutamyl-tRNA(Asn/Gln) amidotransferase subunit B from Streptococcus sanguinis (strain SK36).